The following is a 416-amino-acid chain: 5-methylthioadenosine/S-adenosylhomocysteine deaminase 2 (416 aa).

The Zn(2+) site is built by His58 and His60. Substrate contacts are provided by Glu86 and His178. His205 provides a ligand contact to Zn(2+). Substrate contacts are provided by Glu208 and Asp293. A Zn(2+)-binding site is contributed by Asp293.

This sequence belongs to the metallo-dependent hydrolases superfamily. MTA/SAH deaminase family. Zn(2+) serves as cofactor.

The enzyme catalyses S-adenosyl-L-homocysteine + H2O + H(+) = S-inosyl-L-homocysteine + NH4(+). It catalyses the reaction S-methyl-5'-thioadenosine + H2O + H(+) = S-methyl-5'-thioinosine + NH4(+). Its function is as follows. Catalyzes the deamination of 5-methylthioadenosine and S-adenosyl-L-homocysteine into 5-methylthioinosine and S-inosyl-L-homocysteine, respectively. Is also able to deaminate adenosine. This Archaeoglobus fulgidus (strain ATCC 49558 / DSM 4304 / JCM 9628 / NBRC 100126 / VC-16) protein is 5-methylthioadenosine/S-adenosylhomocysteine deaminase 2.